The primary structure comprises 186 residues: Small ribosomal subunit protein uS5 (186 aa).

In terms of domain architecture, S5 DRBM spans 20–83 (FVDKLVHINR…EAAKRDMIFV (64 aa)).

Belongs to the universal ribosomal protein uS5 family. Part of the 30S ribosomal subunit. Contacts proteins S4 and S8.

Functionally, with S4 and S12 plays an important role in translational accuracy. Located at the back of the 30S subunit body where it stabilizes the conformation of the head with respect to the body. This Brucella anthropi (strain ATCC 49188 / DSM 6882 / CCUG 24695 / JCM 21032 / LMG 3331 / NBRC 15819 / NCTC 12168 / Alc 37) (Ochrobactrum anthropi) protein is Small ribosomal subunit protein uS5.